Reading from the N-terminus, the 221-residue chain is UPF0319 protein CGSHiEE_03630 (221 aa).

The first 21 residues, 1-21, serve as a signal peptide directing secretion; the sequence is MKLRAVVLGLATLCTSTATFA.

The protein belongs to the UPF0319 family.

This Haemophilus influenzae (strain PittEE) protein is UPF0319 protein CGSHiEE_03630.